Here is a 399-residue protein sequence, read N- to C-terminus: 4-hydroxy-3-methylbut-2-enyl diphosphate reductase (399 aa).

Residue Cys66 coordinates [4Fe-4S] cluster. A (2E)-4-hydroxy-3-methylbut-2-enyl diphosphate-binding site is contributed by His96. A dimethylallyl diphosphate-binding site is contributed by His96. His96 contacts isopentenyl diphosphate. Residue Cys157 coordinates [4Fe-4S] cluster. His185 is a binding site for (2E)-4-hydroxy-3-methylbut-2-enyl diphosphate. His185 provides a ligand contact to dimethylallyl diphosphate. Isopentenyl diphosphate is bound at residue His185. Glu187 (proton donor) is an active-site residue. Residue Thr250 coordinates (2E)-4-hydroxy-3-methylbut-2-enyl diphosphate. Position 288 (Cys288) interacts with [4Fe-4S] cluster. Positions 317, 318, 319, and 380 each coordinate (2E)-4-hydroxy-3-methylbut-2-enyl diphosphate. Dimethylallyl diphosphate-binding residues include Ser317, Ser318, Asn319, and Ser380. 4 residues coordinate isopentenyl diphosphate: Ser317, Ser318, Asn319, and Ser380.

Belongs to the IspH family. [4Fe-4S] cluster is required as a cofactor.

It carries out the reaction isopentenyl diphosphate + 2 oxidized [2Fe-2S]-[ferredoxin] + H2O = (2E)-4-hydroxy-3-methylbut-2-enyl diphosphate + 2 reduced [2Fe-2S]-[ferredoxin] + 2 H(+). The enzyme catalyses dimethylallyl diphosphate + 2 oxidized [2Fe-2S]-[ferredoxin] + H2O = (2E)-4-hydroxy-3-methylbut-2-enyl diphosphate + 2 reduced [2Fe-2S]-[ferredoxin] + 2 H(+). Its pathway is isoprenoid biosynthesis; dimethylallyl diphosphate biosynthesis; dimethylallyl diphosphate from (2E)-4-hydroxy-3-methylbutenyl diphosphate: step 1/1. It functions in the pathway isoprenoid biosynthesis; isopentenyl diphosphate biosynthesis via DXP pathway; isopentenyl diphosphate from 1-deoxy-D-xylulose 5-phosphate: step 6/6. Its function is as follows. Catalyzes the conversion of 1-hydroxy-2-methyl-2-(E)-butenyl 4-diphosphate (HMBPP) into a mixture of isopentenyl diphosphate (IPP) and dimethylallyl diphosphate (DMAPP). Acts in the terminal step of the DOXP/MEP pathway for isoprenoid precursor biosynthesis. In Synechococcus sp. (strain CC9605), this protein is 4-hydroxy-3-methylbut-2-enyl diphosphate reductase.